Here is a 257-residue protein sequence, read N- to C-terminus: tRNA pseudouridine synthase A (257 aa).

Asp-52 (nucleophile) is an active-site residue. Tyr-111 contacts substrate.

It belongs to the tRNA pseudouridine synthase TruA family. As to quaternary structure, homodimer.

The enzyme catalyses uridine(38/39/40) in tRNA = pseudouridine(38/39/40) in tRNA. In terms of biological role, formation of pseudouridine at positions 38, 39 and 40 in the anticodon stem and loop of transfer RNAs. This Dinoroseobacter shibae (strain DSM 16493 / NCIMB 14021 / DFL 12) protein is tRNA pseudouridine synthase A.